Consider the following 368-residue polypeptide: Quinolinate synthase (368 aa).

Iminosuccinate-binding residues include H46 and S63. C110 is a binding site for [4Fe-4S] cluster. Residues 141–143 (YVN) and S162 each bind iminosuccinate. C230 contributes to the [4Fe-4S] cluster binding site. Iminosuccinate contacts are provided by residues 256-258 (HPE) and T273. [4Fe-4S] cluster is bound at residue C320.

It belongs to the quinolinate synthase family. Type 3 subfamily. Requires [4Fe-4S] cluster as cofactor.

The protein localises to the cytoplasm. It carries out the reaction iminosuccinate + dihydroxyacetone phosphate = quinolinate + phosphate + 2 H2O + H(+). It participates in cofactor biosynthesis; NAD(+) biosynthesis; quinolinate from iminoaspartate: step 1/1. Its function is as follows. Catalyzes the condensation of iminoaspartate with dihydroxyacetone phosphate to form quinolinate. The sequence is that of Quinolinate synthase from Bacillus cereus (strain ATCC 10987 / NRS 248).